A 513-amino-acid polypeptide reads, in one-letter code: GMP synthase [glutamine-hydrolyzing] (513 aa).

The region spanning 9–198 (LILVLDFGSQ…VRRVCNCTGE (190 aa)) is the Glutamine amidotransferase type-1 domain. The Nucleophile role is filled by cysteine 86. Catalysis depends on residues histidine 172 and glutamate 174. Positions 199-388 (WTMENFIEIE…LGIPEHLVWR (190 aa)) constitute a GMPS ATP-PPase domain. 226-232 (SGGVDSS) is an ATP binding site.

As to quaternary structure, homodimer.

The enzyme catalyses XMP + L-glutamine + ATP + H2O = GMP + L-glutamate + AMP + diphosphate + 2 H(+). It participates in purine metabolism; GMP biosynthesis; GMP from XMP (L-Gln route): step 1/1. Functionally, catalyzes the synthesis of GMP from XMP. The protein is GMP synthase [glutamine-hydrolyzing] of Staphylococcus epidermidis (strain ATCC 12228 / FDA PCI 1200).